The primary structure comprises 349 residues: Heat-inducible transcription repressor HrcA (349 aa).

Belongs to the HrcA family.

In terms of biological role, negative regulator of class I heat shock genes (grpE-dnaK-dnaJ and groELS operons). Prevents heat-shock induction of these operons. This is Heat-inducible transcription repressor HrcA from Lactobacillus acidophilus (strain ATCC 700396 / NCK56 / N2 / NCFM).